We begin with the raw amino-acid sequence, 303 residues long: Oxygen-dependent coproporphyrinogen-III oxidase (303 aa).

Serine 93 contacts substrate. Histidine 97 and histidine 107 together coordinate a divalent metal cation. Residue histidine 107 is the Proton donor of the active site. A substrate-binding site is contributed by 109-111 (NVR). Positions 146 and 176 each coordinate a divalent metal cation. Residues 241 to 276 (YVEFNLVYDRGTLFGLQSGGRTESILMSLPPQVRWG) are important for dimerization. 259 to 261 (GGR) contacts substrate.

Belongs to the aerobic coproporphyrinogen-III oxidase family. As to quaternary structure, homodimer. A divalent metal cation is required as a cofactor.

The protein resides in the cytoplasm. It carries out the reaction coproporphyrinogen III + O2 + 2 H(+) = protoporphyrinogen IX + 2 CO2 + 2 H2O. The protein operates within porphyrin-containing compound metabolism; protoporphyrin-IX biosynthesis; protoporphyrinogen-IX from coproporphyrinogen-III (O2 route): step 1/1. In terms of biological role, involved in the heme biosynthesis. Catalyzes the aerobic oxidative decarboxylation of propionate groups of rings A and B of coproporphyrinogen-III to yield the vinyl groups in protoporphyrinogen-IX. In Pseudomonas putida (strain GB-1), this protein is Oxygen-dependent coproporphyrinogen-III oxidase.